Consider the following 269-residue polypeptide: 3-deoxy-manno-octulosonate cytidylyltransferase (269 aa).

Belongs to the KdsB family.

It localises to the cytoplasm. It catalyses the reaction 3-deoxy-alpha-D-manno-oct-2-ulosonate + CTP = CMP-3-deoxy-beta-D-manno-octulosonate + diphosphate. It functions in the pathway nucleotide-sugar biosynthesis; CMP-3-deoxy-D-manno-octulosonate biosynthesis; CMP-3-deoxy-D-manno-octulosonate from 3-deoxy-D-manno-octulosonate and CTP: step 1/1. It participates in bacterial outer membrane biogenesis; lipopolysaccharide biosynthesis. In terms of biological role, activates KDO (a required 8-carbon sugar) for incorporation into bacterial lipopolysaccharide in Gram-negative bacteria. The chain is 3-deoxy-manno-octulosonate cytidylyltransferase from Cupriavidus pinatubonensis (strain JMP 134 / LMG 1197) (Cupriavidus necator (strain JMP 134)).